A 64-amino-acid polypeptide reads, in one-letter code: U-myrmeciitoxin(01)-Mg4b (64 aa).

An N-terminal signal peptide occupies residues 1–25; the sequence is MGKIFFFVLMIAIIGSTFLIEEALG.

It belongs to the ant myrmeciitoxin-01 family. In terms of assembly, homodimer; disulfide-linked. In terms of processing, contains 2 intrachain disulfide bonds (per chain) and 1 interchain disulfide bond. In terms of tissue distribution, expressed by the venom gland.

Its subcellular location is the secreted. May have antimicrobial properties, like most ant linear peptides. In Myrmecia gulosa (Red bulldog ant), this protein is U-myrmeciitoxin(01)-Mg4b.